Consider the following 356-residue polypeptide: Alanine racemase, catabolic (356 aa).

Lys35 functions as the Proton acceptor; specific for D-alanine in the catalytic mechanism. Lys35 carries the N6-(pyridoxal phosphate)lysine modification. Arg130 lines the substrate pocket. Tyr253 functions as the Proton acceptor; specific for L-alanine in the catalytic mechanism. Met301 contributes to the substrate binding site.

The protein belongs to the alanine racemase family. It depends on pyridoxal 5'-phosphate as a cofactor.

It carries out the reaction L-alanine = D-alanine. Its function is as follows. Isomerizes L-alanine to D-alanine which is then oxidized to pyruvate by DadA. In Escherichia coli O6:H1 (strain CFT073 / ATCC 700928 / UPEC), this protein is Alanine racemase, catabolic (dadX).